The chain runs to 311 residues: MSTFWSGYIALLTLGTIVALFWLIFATRKGESAGTTDQTMGHAFDGIEEYDNPLPRWWFLLFIGTLVFGILYLVLYPGLGNWKGVLPGYEGGWTQEKQWEREVAQADEKYGPIFAKYAAMSVEEVAQDPQAVKMGARLFANYCSICHGSDAKGSLGFPNLADQDWRWGGDAASIKTSILNGRIAAMPAWGQAIGEEGVKNVAAFVRKDLAGLPLPEGTDADLSAGKNVYAQTCAVCHGQGGEGMAALGAPKLNSAAGWIYGSSLGQLQQTIRHGRNGQMPAQQQYLGDDKVHLLAAYVYSLSQKPEQLANQ.

A run of 2 helical transmembrane segments spans residues 4-24 (FWSG…FWLI) and 56-76 (RWWF…LVLY). 2 Cytochrome c domains span residues 130 to 209 (QAVK…RKDL) and 220 to 302 (ADLS…YSLS). Heme c is bound by residues cysteine 143, cysteine 146, histidine 147, methionine 186, cysteine 233, cysteine 236, histidine 237, and methionine 279.

It belongs to the CcoP / FixP family. Component of the cbb3-type cytochrome c oxidase at least composed of CcoN, CcoO, CcoQ and CcoP. Heme c is required as a cofactor.

Its subcellular location is the cell inner membrane. Its pathway is energy metabolism; oxidative phosphorylation. Functionally, C-type cytochrome. Part of the cbb3-type cytochrome c oxidase complex. CcoP subunit is required for transferring electrons from donor cytochrome c via its heme groups to CcoO subunit. From there, electrons are shuttled to the catalytic binuclear center of CcoN subunit where oxygen reduction takes place. The complex also functions as a proton pump. This chain is Cbb3-type cytochrome c oxidase subunit CcoP1, found in Stutzerimonas stutzeri (Pseudomonas stutzeri).